The primary structure comprises 513 residues: ATP synthase subunit alpha (513 aa).

169-176 lines the ATP pocket; the sequence is GDRQTGKT.

The protein belongs to the ATPase alpha/beta chains family. In terms of assembly, F-type ATPases have 2 components, CF(1) - the catalytic core - and CF(0) - the membrane proton channel. CF(1) has five subunits: alpha(3), beta(3), gamma(1), delta(1), epsilon(1). CF(0) has three main subunits: a(1), b(2) and c(9-12). The alpha and beta chains form an alternating ring which encloses part of the gamma chain. CF(1) is attached to CF(0) by a central stalk formed by the gamma and epsilon chains, while a peripheral stalk is formed by the delta and b chains.

It localises to the cell inner membrane. The enzyme catalyses ATP + H2O + 4 H(+)(in) = ADP + phosphate + 5 H(+)(out). Produces ATP from ADP in the presence of a proton gradient across the membrane. The alpha chain is a regulatory subunit. In Shewanella oneidensis (strain ATCC 700550 / JCM 31522 / CIP 106686 / LMG 19005 / NCIMB 14063 / MR-1), this protein is ATP synthase subunit alpha.